We begin with the raw amino-acid sequence, 42 residues long: Large ribosomal subunit protein bL36 (42 aa).

This sequence belongs to the bacterial ribosomal protein bL36 family.

The chain is Large ribosomal subunit protein bL36 from Anaplasma marginale (strain St. Maries).